The primary structure comprises 212 residues: Ribosomal RNA small subunit methyltransferase G (212 aa).

Residues Gly-76, Met-81, 127–128 (VE), and Arg-145 contribute to the S-adenosyl-L-methionine site.

It belongs to the methyltransferase superfamily. RNA methyltransferase RsmG family.

The protein resides in the cytoplasm. The enzyme catalyses guanosine(527) in 16S rRNA + S-adenosyl-L-methionine = N(7)-methylguanosine(527) in 16S rRNA + S-adenosyl-L-homocysteine. Functionally, specifically methylates the N7 position of guanine in position 527 of 16S rRNA. This chain is Ribosomal RNA small subunit methyltransferase G, found in Acinetobacter baylyi (strain ATCC 33305 / BD413 / ADP1).